The chain runs to 412 residues: Phosphate-repressible acid phosphatase (412 aa).

The N-terminal stretch at 1–19 (MLTKQTLLAFVGALALATG) is a signal peptide. N74, N121, N186, and N208 each carry an N-linked (GlcNAc...) asparagine glycan. The Proton donor role is filled by D215. N217, N332, and N343 each carry an N-linked (GlcNAc...) asparagine glycan.

In terms of processing, the N-terminus is blocked.

The protein resides in the secreted. The enzyme catalyses a phosphate monoester + H2O = an alcohol + phosphate. This is Phosphate-repressible acid phosphatase (PHOA) from Penicillium chrysogenum (Penicillium notatum).